A 151-amino-acid polypeptide reads, in one-letter code: MKVIFLQDVKNQGKRGQIKEVPDGYANNFLIKNKKAVYASPENISKLNGQQNLEAKKAAEILEEAKQLKNKLASTKTIVQFSEHVGPDGRLNGSVTAKEIADQLAKQFNLTVDKRKLQLPQPIKTIGLHEVPAKLHTQVSAMIKVNVSELN.

Belongs to the bacterial ribosomal protein bL9 family.

Binds to the 23S rRNA. This Oenococcus oeni (strain ATCC BAA-331 / PSU-1) protein is Large ribosomal subunit protein bL9.